The following is a 676-amino-acid chain: DNA-directed RNA polymerase subunit beta' (676 aa).

Zn(2+)-binding residues include Cys-69, Cys-71, Cys-87, and Cys-90. Residues Asp-489, Asp-491, and Asp-493 each coordinate Mg(2+).

This sequence belongs to the RNA polymerase beta' chain family. RpoC1 subfamily. As to quaternary structure, in plastids the minimal PEP RNA polymerase catalytic core is composed of four subunits: alpha, beta, beta', and beta''. When a (nuclear-encoded) sigma factor is associated with the core the holoenzyme is formed, which can initiate transcription. Mg(2+) serves as cofactor. Zn(2+) is required as a cofactor.

The protein resides in the plastid. Its subcellular location is the chloroplast. It catalyses the reaction RNA(n) + a ribonucleoside 5'-triphosphate = RNA(n+1) + diphosphate. Its function is as follows. DNA-dependent RNA polymerase catalyzes the transcription of DNA into RNA using the four ribonucleoside triphosphates as substrates. The chain is DNA-directed RNA polymerase subunit beta' from Lolium perenne (Perennial ryegrass).